Consider the following 155-residue polypeptide: Small ribosomal subunit protein uS7cz/uS7cy (155 aa).

It belongs to the universal ribosomal protein uS7 family. In terms of assembly, part of the 30S ribosomal subunit.

It is found in the plastid. The protein localises to the chloroplast. Its function is as follows. One of the primary rRNA binding proteins, it binds directly to 16S rRNA where it nucleates assembly of the head domain of the 30S subunit. In Calycanthus floridus var. glaucus (Eastern sweetshrub), this protein is Small ribosomal subunit protein uS7cz/uS7cy (rps7-A).